The following is a 504-amino-acid chain: Cytochrome P450 6B2 (504 aa).

Residue cysteine 445 coordinates heme.

The protein belongs to the cytochrome P450 family. It depends on heme as a cofactor.

It is found in the endoplasmic reticulum membrane. The protein resides in the microsome membrane. It catalyses the reaction an organic molecule + reduced [NADPH--hemoprotein reductase] + O2 = an alcohol + oxidized [NADPH--hemoprotein reductase] + H2O + H(+). The protein is Cytochrome P450 6B2 (CYP6B2) of Helicoverpa armigera (Cotton bollworm).